A 379-amino-acid chain; its full sequence is Epoxyqueuosine reductase (379 aa).

Catalysis depends on D140, which acts as the Proton donor. One can recognise a 4Fe-4S ferredoxin-type domain in the interval 184 to 214 (FEPDTPASDLCGSCNQCVKACPTGSLLGEGK). Residues C194, C197, C200, C204, C220, C246, C249, and C253 each coordinate [4Fe-4S] cluster. An HEAT-like PBS-type repeat occupies 307-332 (QRNAIIILARYKDKTAVPDLIDCLQN).

This sequence belongs to the QueG family. In terms of assembly, monomer. Requires cob(II)alamin as cofactor. [4Fe-4S] cluster is required as a cofactor.

It localises to the cytoplasm. The enzyme catalyses epoxyqueuosine(34) in tRNA + AH2 = queuosine(34) in tRNA + A + H2O. Its pathway is tRNA modification; tRNA-queuosine biosynthesis. Catalyzes the conversion of epoxyqueuosine (oQ) to queuosine (Q), which is a hypermodified base found in the wobble positions of tRNA(Asp), tRNA(Asn), tRNA(His) and tRNA(Tyr). In Listeria monocytogenes serovar 1/2a (strain ATCC BAA-679 / EGD-e), this protein is Epoxyqueuosine reductase.